The following is a 630-amino-acid chain: Protein phosphatase 2C-like domain-containing protein 1 (630 aa).

The PPM-type phosphatase domain occupies 170-621; the sequence is GVGICEDRNS…DNITVMVIFL (452 aa). Positions 557–569 are enriched in basic and acidic residues; it reads TTHRKPCSEKVTD. Positions 557–578 are disordered; sequence TTHRKPCSEKVTDRPTSVNDVA.

This sequence belongs to the PP2C family.

The protein is Protein phosphatase 2C-like domain-containing protein 1 (PP2D1) of Homo sapiens (Human).